A 317-amino-acid chain; its full sequence is 4-hydroxy-3-methylbut-2-enyl diphosphate reductase (317 aa).

Cys-12 provides a ligand contact to [4Fe-4S] cluster. Residues His-43 and His-81 each coordinate (2E)-4-hydroxy-3-methylbut-2-enyl diphosphate. Dimethylallyl diphosphate-binding residues include His-43 and His-81. The isopentenyl diphosphate site is built by His-43 and His-81. [4Fe-4S] cluster is bound at residue Cys-103. Position 131 (His-131) interacts with (2E)-4-hydroxy-3-methylbut-2-enyl diphosphate. A dimethylallyl diphosphate-binding site is contributed by His-131. An isopentenyl diphosphate-binding site is contributed by His-131. Catalysis depends on Glu-133, which acts as the Proton donor. Residue Thr-172 coordinates (2E)-4-hydroxy-3-methylbut-2-enyl diphosphate. Cys-200 is a binding site for [4Fe-4S] cluster. (2E)-4-hydroxy-3-methylbut-2-enyl diphosphate contacts are provided by Ser-228, Asn-230, and Ser-273. Residues Ser-228, Asn-230, and Ser-273 each coordinate dimethylallyl diphosphate. Isopentenyl diphosphate contacts are provided by Ser-228, Asn-230, and Ser-273.

It belongs to the IspH family. The cofactor is [4Fe-4S] cluster.

It catalyses the reaction isopentenyl diphosphate + 2 oxidized [2Fe-2S]-[ferredoxin] + H2O = (2E)-4-hydroxy-3-methylbut-2-enyl diphosphate + 2 reduced [2Fe-2S]-[ferredoxin] + 2 H(+). The catalysed reaction is dimethylallyl diphosphate + 2 oxidized [2Fe-2S]-[ferredoxin] + H2O = (2E)-4-hydroxy-3-methylbut-2-enyl diphosphate + 2 reduced [2Fe-2S]-[ferredoxin] + 2 H(+). The protein operates within isoprenoid biosynthesis; dimethylallyl diphosphate biosynthesis; dimethylallyl diphosphate from (2E)-4-hydroxy-3-methylbutenyl diphosphate: step 1/1. Its pathway is isoprenoid biosynthesis; isopentenyl diphosphate biosynthesis via DXP pathway; isopentenyl diphosphate from 1-deoxy-D-xylulose 5-phosphate: step 6/6. Its function is as follows. Catalyzes the conversion of 1-hydroxy-2-methyl-2-(E)-butenyl 4-diphosphate (HMBPP) into a mixture of isopentenyl diphosphate (IPP) and dimethylallyl diphosphate (DMAPP). Acts in the terminal step of the DOXP/MEP pathway for isoprenoid precursor biosynthesis. The protein is 4-hydroxy-3-methylbut-2-enyl diphosphate reductase of Exiguobacterium sp. (strain ATCC BAA-1283 / AT1b).